The following is a 190-amino-acid chain: Peptidyl-tRNA hydrolase (190 aa).

Position 18 (Y18) interacts with tRNA. H23 serves as the catalytic Proton acceptor. Positions 65, 67, and 113 each coordinate tRNA.

The protein belongs to the PTH family. Monomer.

It localises to the cytoplasm. The catalysed reaction is an N-acyl-L-alpha-aminoacyl-tRNA + H2O = an N-acyl-L-amino acid + a tRNA + H(+). In terms of biological role, hydrolyzes ribosome-free peptidyl-tRNAs (with 1 or more amino acids incorporated), which drop off the ribosome during protein synthesis, or as a result of ribosome stalling. Functionally, catalyzes the release of premature peptidyl moieties from peptidyl-tRNA molecules trapped in stalled 50S ribosomal subunits, and thus maintains levels of free tRNAs and 50S ribosomes. The sequence is that of Peptidyl-tRNA hydrolase from Akkermansia muciniphila (strain ATCC BAA-835 / DSM 22959 / JCM 33894 / BCRC 81048 / CCUG 64013 / CIP 107961 / Muc).